A 622-amino-acid chain; its full sequence is 1-deoxy-D-xylulose-5-phosphate synthase (622 aa).

Thiamine diphosphate is bound by residues H74 and 115-117 (GHS). A Mg(2+)-binding site is contributed by D146. Thiamine diphosphate is bound by residues 147 to 148 (GA), N175, Y286, and E366. N175 contributes to the Mg(2+) binding site.

Belongs to the transketolase family. DXPS subfamily. Homodimer. Requires Mg(2+) as cofactor. The cofactor is thiamine diphosphate.

It catalyses the reaction D-glyceraldehyde 3-phosphate + pyruvate + H(+) = 1-deoxy-D-xylulose 5-phosphate + CO2. It participates in metabolic intermediate biosynthesis; 1-deoxy-D-xylulose 5-phosphate biosynthesis; 1-deoxy-D-xylulose 5-phosphate from D-glyceraldehyde 3-phosphate and pyruvate: step 1/1. Its function is as follows. Catalyzes the acyloin condensation reaction between C atoms 2 and 3 of pyruvate and glyceraldehyde 3-phosphate to yield 1-deoxy-D-xylulose-5-phosphate (DXP). The polypeptide is 1-deoxy-D-xylulose-5-phosphate synthase (Carboxydothermus hydrogenoformans (strain ATCC BAA-161 / DSM 6008 / Z-2901)).